A 200-amino-acid polypeptide reads, in one-letter code: MGNGLSDQTSILSSLPSFQSFHIVILGLDCAGKTTVLYRLQFNEFVNTVPTKGFNTEKIKVTLGNSKTVTFHFWDVGGQEKLRPLWKSYTRCTDGIVFVVDSVDVERMEEAKTELHKITRISENQGVPVLIVANKQDLRNSLSLSEIEKLLAMGELSSSTPWHLQPTCAIIGDGLKEGLEKLHDMIIKRRKMLRQQKKKR.

Gly2 carries N-myristoyl glycine lipidation. GTP contacts are provided by residues 27-34 (GLDCAGKT), 75-79 (DVGGQ), and 134-137 (NKQD).

The protein belongs to the small GTPase superfamily. Arf family. In terms of assembly, interacts with CYTH2. Interacts with KPNA2; the interaction is direct. Does not interact with ARL4A. In terms of processing, myristoylated. In terms of tissue distribution, expressed strongly in testis and liver. Expressed slightly in heart, spleen, lung and kidney.

The protein resides in the cell membrane. It localises to the cytoplasm. The protein localises to the nucleus. It is found in the nucleolus. Functionally, small GTP-binding protein which cycles between an inactive GDP-bound and an active GTP-bound form, and the rate of cycling is regulated by guanine nucleotide exchange factors (GEF) and GTPase-activating proteins (GAP). GTP-binding protein that does not act as an allosteric activator of the cholera toxin catalytic subunit. Recruits CYTH1, CYTH2, CYTH3 and CYTH4 to the plasma membrane in GDP-bound form. The polypeptide is ADP-ribosylation factor-like protein 4A (Arl4a) (Mus musculus (Mouse)).